We begin with the raw amino-acid sequence, 475 residues long: Sulfate adenylyltransferase subunit 1 (475 aa).

One can recognise a tr-type G domain in the interval 25–239; sequence KSLLRFLTCG…EVLETVEIQR (215 aa). Residues 34-41 form a G1 region; the sequence is GSVDDGKS. A GTP-binding site is contributed by 34–41; the sequence is GSVDDGKS. Positions 92–96 are G2; that stretch reads GITID. Positions 113–116 are G3; the sequence is DTPG. Residues 113–117 and 168–171 contribute to the GTP site; these read DTPGH and NKMD. The segment at 168 to 171 is G4; it reads NKMD. Residues 206–208 form a G5 region; that stretch reads SAL.

The protein belongs to the TRAFAC class translation factor GTPase superfamily. Classic translation factor GTPase family. CysN/NodQ subfamily. Heterodimer composed of CysD, the smaller subunit, and CysN.

It catalyses the reaction sulfate + ATP + H(+) = adenosine 5'-phosphosulfate + diphosphate. It participates in sulfur metabolism; hydrogen sulfide biosynthesis; sulfite from sulfate: step 1/3. Functionally, with CysD forms the ATP sulfurylase (ATPS) that catalyzes the adenylation of sulfate producing adenosine 5'-phosphosulfate (APS) and diphosphate, the first enzymatic step in sulfur assimilation pathway. APS synthesis involves the formation of a high-energy phosphoric-sulfuric acid anhydride bond driven by GTP hydrolysis by CysN coupled to ATP hydrolysis by CysD. In Escherichia coli (strain SE11), this protein is Sulfate adenylyltransferase subunit 1.